The primary structure comprises 218 residues: Protein-L-isoaspartate O-methyltransferase (218 aa).

Ser-60 is a catalytic residue.

Belongs to the methyltransferase superfamily. L-isoaspartyl/D-aspartyl protein methyltransferase family.

The protein localises to the cytoplasm. The catalysed reaction is [protein]-L-isoaspartate + S-adenosyl-L-methionine = [protein]-L-isoaspartate alpha-methyl ester + S-adenosyl-L-homocysteine. Functionally, catalyzes the methyl esterification of L-isoaspartyl residues in peptides and proteins that result from spontaneous decomposition of normal L-aspartyl and L-asparaginyl residues. It plays a role in the repair and/or degradation of damaged proteins. In Roseiflexus castenholzii (strain DSM 13941 / HLO8), this protein is Protein-L-isoaspartate O-methyltransferase.